A 101-amino-acid chain; its full sequence is NAD(P)H-quinone oxidoreductase subunit 4L, chloroplastic (101 aa).

The next 3 membrane-spanning stretches (helical) occupy residues 2 to 22 (MLEHVLILSAYLFSIGIYGLI), 27 to 46 (MVRALMCLELILNAVNMNLI), and 61 to 81 (IFSIFVIAIAAAEAAIGPAIV).

The protein belongs to the complex I subunit 4L family. In terms of assembly, NDH is composed of at least 16 different subunits, 5 of which are encoded in the nucleus.

Its subcellular location is the plastid. It is found in the chloroplast thylakoid membrane. It catalyses the reaction a plastoquinone + NADH + (n+1) H(+)(in) = a plastoquinol + NAD(+) + n H(+)(out). The enzyme catalyses a plastoquinone + NADPH + (n+1) H(+)(in) = a plastoquinol + NADP(+) + n H(+)(out). In terms of biological role, NDH shuttles electrons from NAD(P)H:plastoquinone, via FMN and iron-sulfur (Fe-S) centers, to quinones in the photosynthetic chain and possibly in a chloroplast respiratory chain. The immediate electron acceptor for the enzyme in this species is believed to be plastoquinone. Couples the redox reaction to proton translocation, and thus conserves the redox energy in a proton gradient. This chain is NAD(P)H-quinone oxidoreductase subunit 4L, chloroplastic, found in Drimys granadensis.